Here is a 229-residue protein sequence, read N- to C-terminus: RNA pyrophosphohydrolase (229 aa).

The 144-residue stretch at Gly6 to Thr149 folds into the Nudix hydrolase domain. A Nudix box motif is present at residues Gly38–Gly59. A disordered region spans residues Ser168–Ala229.

The protein belongs to the Nudix hydrolase family. RppH subfamily. A divalent metal cation is required as a cofactor.

Functionally, accelerates the degradation of transcripts by removing pyrophosphate from the 5'-end of triphosphorylated RNA, leading to a more labile monophosphorylated state that can stimulate subsequent ribonuclease cleavage. This chain is RNA pyrophosphohydrolase, found in Delftia acidovorans (strain DSM 14801 / SPH-1).